A 255-amino-acid chain; its full sequence is Aquaporin TIP4-1 (255 aa).

Helical transmembrane passes span 25–45 and 61–81; these read AVLAELVLTFLFVFTGVSAAM and TLAAVAIAHALAAGVLVTAGF. Residues 89–91 carry the NPA 1 motif; the sequence is NPA. 3 helical membrane passes run 108-128, 148-168, and 176-196; these read VLYVAAQLLASSAACVLLRFL, GLVMEVILTFSLLFVTYAMIL, and AIGPLLTGLIVGANSLAGGNF. The NPA 2 motif lies at 202-204; it reads NPA. The chain crosses the membrane as a helical span at residues 223 to 243; that stretch reads WIGPLLGGPLAGFVYESLFLV.

Belongs to the MIP/aquaporin (TC 1.A.8) family. TIP (TC 1.A.8.10) subfamily.

Its subcellular location is the vacuole membrane. Functionally, aquaporins facilitate the transport of water and small neutral solutes across cell membranes. This Zea mays (Maize) protein is Aquaporin TIP4-1 (TIP4-1).